The primary structure comprises 492 residues: Catalase (492 aa).

Residues His-65 and Asn-138 contribute to the active site. Tyr-348 is a heme binding site.

The protein belongs to the catalase family. In terms of assembly, homotetramer. Heme serves as cofactor. As to expression, in stems, leaves, roots and developing fruits.

It is found in the cytoplasm. Its subcellular location is the cytosol. The protein localises to the peroxisome matrix. It catalyses the reaction 2 H2O2 = O2 + 2 H2O. Its function is as follows. Catalyzes the degradation of hydrogen peroxide (H(2)O(2)) generated by peroxisomal oxidases to water and oxygen, thereby protecting cells from the toxic effects of hydrogen peroxide. This Capsicum annuum (Capsicum pepper) protein is Catalase (CAT).